The sequence spans 100 residues: Large ribosomal subunit protein uL23 (100 aa).

It belongs to the universal ribosomal protein uL23 family. Part of the 50S ribosomal subunit. Contacts protein L29, and trigger factor when it is bound to the ribosome.

In terms of biological role, one of the early assembly proteins it binds 23S rRNA. One of the proteins that surrounds the polypeptide exit tunnel on the outside of the ribosome. Forms the main docking site for trigger factor binding to the ribosome. This chain is Large ribosomal subunit protein uL23, found in Bradyrhizobium diazoefficiens (strain JCM 10833 / BCRC 13528 / IAM 13628 / NBRC 14792 / USDA 110).